We begin with the raw amino-acid sequence, 237 residues long: Heme oxygenase (237 aa).

Heme b is bound at residue histidine 17.

It belongs to the heme oxygenase family.

It is found in the plastid. The protein resides in the chloroplast. The enzyme catalyses heme b + 3 reduced [NADPH--hemoprotein reductase] + 3 O2 = biliverdin IXalpha + CO + Fe(2+) + 3 oxidized [NADPH--hemoprotein reductase] + 3 H2O + H(+). Functionally, catalyzes the opening of the heme ring with the release of iron. Key enzyme in the synthesis of the chromophoric part of the photosynthetic antennae. In Guillardia theta (Cryptophyte), this protein is Heme oxygenase (pbsA).